The sequence spans 483 residues: ATP synthase subunit beta (483 aa).

Residue 162–169 coordinates ATP; it reads GGAGVGKT.

Belongs to the ATPase alpha/beta chains family. In terms of assembly, F-type ATPases have 2 components, CF(1) - the catalytic core - and CF(0) - the membrane proton channel. CF(1) has five subunits: alpha(3), beta(3), gamma(1), delta(1), epsilon(1). CF(0) has four main subunits: a(1), b(1), b'(1) and c(9-12).

It is found in the cellular thylakoid membrane. The enzyme catalyses ATP + H2O + 4 H(+)(in) = ADP + phosphate + 5 H(+)(out). Produces ATP from ADP in the presence of a proton gradient across the membrane. The catalytic sites are hosted primarily by the beta subunits. This is ATP synthase subunit beta from Rippkaea orientalis (strain PCC 8801 / RF-1) (Cyanothece sp. (strain PCC 8801)).